A 512-amino-acid polypeptide reads, in one-letter code: Maturase K (512 aa).

This sequence belongs to the intron maturase 2 family. MatK subfamily.

Its subcellular location is the plastid. It is found in the chloroplast. Usually encoded in the trnK tRNA gene intron. Probably assists in splicing its own and other chloroplast group II introns. The polypeptide is Maturase K (Platanus occidentalis (Sycamore)).